The primary structure comprises 109 residues: Hainantoxin-XVIII-4 (109 aa).

A signal peptide spans 1–18 (MKLSIIIIATSLVIAVVA). Residues 19–46 (FPSKDSKAIENDKTEQRMEIVVQETARA) constitute a propeptide that is removed on maturation. 3 disulfide bridges follow: Cys-55/Cys-68, Cys-59/Cys-108, and Cys-61/Cys-81.

It belongs to the neurotoxin 25 family. F7 subfamily. In terms of tissue distribution, expressed by the venom gland.

The protein resides in the secreted. Putative ion channel inhibitor. In Cyriopagopus hainanus (Chinese bird spider), this protein is Hainantoxin-XVIII-4.